Consider the following 59-residue polypeptide: Chromatin protein Cren7 (59 aa).

The protein belongs to the Cren7 family. Monomer. Methylated at multiple sites, to varying extents.

Its subcellular location is the chromosome. The protein resides in the cytoplasm. A chromatin protein, binds double-stranded DNA without sequence specificity. Constrains negative DNA supercoils. This is Chromatin protein Cren7 from Sulfolobus acidocaldarius (strain ATCC 33909 / DSM 639 / JCM 8929 / NBRC 15157 / NCIMB 11770).